Reading from the N-terminus, the 305-residue chain is tRNA dimethylallyltransferase (305 aa).

14-21 lines the ATP pocket; sequence GPTASGKT. Residue 16-21 coordinates substrate; sequence TASGKT. 3 interaction with substrate tRNA regions span residues 39–42, 163–167, and 243–248; these read DSAL, QRIIR, and RCVGYR.

It belongs to the IPP transferase family. In terms of assembly, monomer. It depends on Mg(2+) as a cofactor.

The catalysed reaction is adenosine(37) in tRNA + dimethylallyl diphosphate = N(6)-dimethylallyladenosine(37) in tRNA + diphosphate. Its function is as follows. Catalyzes the transfer of a dimethylallyl group onto the adenine at position 37 in tRNAs that read codons beginning with uridine, leading to the formation of N6-(dimethylallyl)adenosine (i(6)A). The sequence is that of tRNA dimethylallyltransferase from Vesicomyosocius okutanii subsp. Calyptogena okutanii (strain HA).